The following is a 408-amino-acid chain: Imidazolonepropionase (408 aa).

The Fe(3+) site is built by His74 and His76. His74 and His76 together coordinate Zn(2+). Positions 83, 146, and 179 each coordinate 4-imidazolone-5-propanoate. Tyr146 provides a ligand contact to N-formimidoyl-L-glutamate. His244 contacts Fe(3+). Residue His244 coordinates Zn(2+). Gln247 contacts 4-imidazolone-5-propanoate. Residue Asp319 coordinates Fe(3+). Asp319 is a Zn(2+) binding site. Residues Asn321 and Gly323 each coordinate N-formimidoyl-L-glutamate. Thr324 lines the 4-imidazolone-5-propanoate pocket.

The protein belongs to the metallo-dependent hydrolases superfamily. HutI family. It depends on Zn(2+) as a cofactor. Fe(3+) is required as a cofactor.

Its subcellular location is the cytoplasm. It catalyses the reaction 4-imidazolone-5-propanoate + H2O = N-formimidoyl-L-glutamate. Its pathway is amino-acid degradation; L-histidine degradation into L-glutamate; N-formimidoyl-L-glutamate from L-histidine: step 3/3. Catalyzes the hydrolytic cleavage of the carbon-nitrogen bond in imidazolone-5-propanoate to yield N-formimidoyl-L-glutamate. It is the third step in the universal histidine degradation pathway. The protein is Imidazolonepropionase of Ralstonia nicotianae (strain ATCC BAA-1114 / GMI1000) (Ralstonia solanacearum).